Here is a 293-residue protein sequence, read N- to C-terminus: Homoserine kinase (293 aa).

84–94 (PLSRGLGSSSA) provides a ligand contact to ATP.

The protein belongs to the GHMP kinase family. Homoserine kinase subfamily.

The protein localises to the cytoplasm. It catalyses the reaction L-homoserine + ATP = O-phospho-L-homoserine + ADP + H(+). It participates in amino-acid biosynthesis; L-threonine biosynthesis; L-threonine from L-aspartate: step 4/5. In terms of biological role, catalyzes the ATP-dependent phosphorylation of L-homoserine to L-homoserine phosphate. This chain is Homoserine kinase, found in Aliarcobacter butzleri (strain RM4018) (Arcobacter butzleri).